The following is a 1892-amino-acid chain: Kinesin-like protein KIN-12E (1892 aa).

A disordered region spans residues 1–28 (MAGHGAGGRRASTSRAAARRVEAETNEN). The Kinesin motor domain occupies 64–401 (NVQVLIRIRP…LKFAQRAKLI (338 aa)). 145-152 (GQTGSGKT) is a binding site for ATP. Coiled coils occupy residues 406 to 438 (KVNE…QQNM), 486 to 526 (SLRR…TTVK), 1066 to 1139 (LFSN…LHEQ), 1303 to 1357 (KLLQ…LAEN), and 1396 to 1528 (ISET…SYQI). The span at 1633–1649 (LHESNSDTGHTKFEKPS) shows a compositional bias: basic and acidic residues. A disordered region spans residues 1633–1656 (LHESNSDTGHTKFEKPSGRTRGSG). Residues 1780–1841 (MDQRKADLLE…LVGSNQAIAE (62 aa)) adopt a coiled-coil conformation. The interval 1870–1892 (HARHEHSRLQAAKSSRTRRGSHQ) is disordered.

It belongs to the TRAFAC class myosin-kinesin ATPase superfamily. Kinesin family. KIN-12 subfamily.

The polypeptide is Kinesin-like protein KIN-12E (Oryza sativa subsp. japonica (Rice)).